A 205-amino-acid polypeptide reads, in one-letter code: Urease accessory protein UreG (205 aa).

11 to 18 (GPVGSGKT) lines the GTP pocket.

It belongs to the SIMIBI class G3E GTPase family. UreG subfamily. In terms of assembly, homodimer. UreD, UreF and UreG form a complex that acts as a GTP-hydrolysis-dependent molecular chaperone, activating the urease apoprotein by helping to assemble the nickel containing metallocenter of UreC. The UreE protein probably delivers the nickel.

The protein resides in the cytoplasm. Functionally, facilitates the functional incorporation of the urease nickel metallocenter. This process requires GTP hydrolysis, probably effectuated by UreG. In Prochlorococcus marinus (strain NATL2A), this protein is Urease accessory protein UreG.